A 457-amino-acid chain; its full sequence is Non-structural protein V (457 aa).

2 disordered regions span residues 26–104 and 193–403; these read KTYG…DPDD and FVPK…MPIK. Polar residues-rich tracts occupy residues 28–37 and 77–96; these read YGRSSIQQPS and DLSS…SNTR. Acidic residues predominate over residues 240 to 252; that stretch reads SDDEDENQLEYED. Phosphoserine; by host is present on Ser257. Over residues 296 to 317 the composition is skewed to basic and acidic residues; the sequence is FPEKEETPDVRRKDSLMQDSCK. At Ser350 the chain carries Phosphoserine; by host. The Zn(2+) site is built by His406, Cys425, Cys429, Cys441, Cys443, Cys446, Cys450, and Cys453.

Belongs to the paramyxoviruses V protein family. As to quaternary structure, interacts with host IFIH1/MDA5, DHX58/LGP2, STAT1 and STAT2.

Its subcellular location is the host cytoplasm. Functionally, plays an essential role in the inhibition of host immune response. Prevents the establishment of cellular antiviral state by blocking interferon-alpha/beta (IFN-alpha/beta) production and signaling pathway. Interacts with host IFIH1/MDA5 and DHX58/LGP2 to inhibit the transduction pathway involved in the activation of IFN-beta promoter, thus protecting the virus against cell antiviral state. Blocks the type I interferon signaling pathway by interacting with host STAT1 and STAT2 and thereby inhibiting their phosphorylation and subsequent nuclear translocation. Efficiently blocks the type II interferon signaling pathway. This is Non-structural protein V (P/V/C) from Hendra virus (isolate Horse/Autralia/Hendra/1994).